The primary structure comprises 264 residues: Thiamine pyrophosphokinase 1 (264 aa).

Polar residues predominate over residues 1-12 (MPLPTMTHSSSF). Residues 1–27 (MPLPTMTHSSSFLRLPATSSPHPPPAD) form a disordered region.

The protein belongs to the thiamine pyrophosphokinase family.

The protein localises to the cytoplasm. It is found in the cytosol. The catalysed reaction is thiamine + ATP = thiamine diphosphate + AMP + H(+). The protein operates within cofactor biosynthesis; thiamine diphosphate biosynthesis; thiamine diphosphate from thiamine: step 1/1. In terms of biological role, catalyzes the phosphorylation of thiamine to thiamine pyrophosphate (TPP). TPP is an active cofactor for enzymes involved in glycolysis and energy production. Plant leaves require high levels of TPP for photosynthesis and carbohydrate metabolism. The chain is Thiamine pyrophosphokinase 1 (TPK1) from Oryza sativa subsp. japonica (Rice).